A 325-amino-acid polypeptide reads, in one-letter code: Fatty acid synthase alpha subunit hexA (325 aa).

Aspartate 209 is a Mg(2+) binding site. Residues aspartate 209–valine 211, glutamate 255–threonine 265, lysine 279–asparagine 282, and isoleucine 301–histidine 303 each bind acetyl-CoA. Residue serine 302 participates in Mg(2+) binding.

It belongs to the thiolase-like superfamily. Fungal fatty acid synthetase subunit alpha family. In terms of assembly, [Alpha(6)beta(6)] hexamers of two multifunctional subunits (alpha and beta). Post-translationally, 4'-phosphopantetheine is transferred from CoA to a specific serine of the acyl carrier domain by the C-terminal PPT domain. This modification is essential for activity because fatty acids are bound in thioester linkage to the sulfhydryl of the prosthetic group.

The catalysed reaction is acetyl-CoA + n malonyl-CoA + 2n NADPH + 4n H(+) = a long-chain-acyl-CoA + n CoA + n CO2 + 2n NADP(+).. It catalyses the reaction a fatty acyl-[ACP] + malonyl-[ACP] + H(+) = a 3-oxoacyl-[ACP] + holo-[ACP] + CO2. The enzyme catalyses a (3R)-hydroxyacyl-[ACP] + NADP(+) = a 3-oxoacyl-[ACP] + NADPH + H(+). Its pathway is mycotoxin biosynthesis. In terms of biological role, fatty acid synthase alpha subunit; part of the fragmented gene cluster that mediates the biosynthesis of dothistromin (DOTH), a polyketide toxin very similar in structure to the aflatoxin precursor, versicolorin B. The first step of the pathway is the conversion of acetate to norsolorinic acid (NOR) and requires the fatty acid synthase subunits hexA and hexB, as well as the polyketide synthase pksA. PksA combines a hexanoyl starter unit and 7 malonyl-CoA extender units to synthesize the precursor NOR. The hexanoyl starter unit is provided to the acyl-carrier protein (ACP) domain by the fungal fatty acid synthase hexA/hexB. The second step is the conversion of NOR to averantin (AVN) and requires the norsolorinic acid ketoreductase nor1, which catalyzes the dehydration of norsolorinic acid to form (1'S)-averantin. The cytochrome P450 monooxygenase avnA then catalyzes the hydroxylation of AVN to 5'hydroxyaverantin (HAVN). The next step is performed by adhA that transforms HAVN to averufin (AVF). Averufin might then be converted to hydroxyversicolorone by cypX and avfA. Hydroxyversicolorone is further converted versiconal hemiacetal acetate (VHA) by moxY. VHA is then the substrate for the versiconal hemiacetal acetate esterase est1 to yield versiconal (VAL). Versicolorin B synthase vbsA then converts VAL to versicolorin B (VERB) by closing the bisfuran ring. Then, the activity of the versicolorin B desaturase verB leads to versicolorin A (VERA). DotB, a predicted chloroperoxidase, may perform epoxidation of the A-ring of VERA. Alternatively, a cytochrome P450, such as cypX or avnA could catalyze this step. It is also possible that another, uncharacterized, cytochrome P450 enzyme is responsible for this step. Opening of the epoxide could potentially be achieved by the epoxide hydrolase epoA. However, epoA seems not to be required for DOTH biosynthesis, but other epoxide hydrolases may have the ability to complement this hydrolysis. Alternatively, opening of the epoxide ring could be achieved non-enzymatically. The next step is the deoxygenation of ring A to yield the 5,8-dihydroxyanthraquinone which is most likely catalyzed by the NADPH dehydrogenase encoded by ver1. The last stages of DOTH biosynthesis are proposed to involve hydroxylation of the bisfuran. OrdB and norB might have oxidative roles here. An alternative possibility is that cytochrome P450 monoogenases such as avnA and cypX might perform these steps in addition to previously proposed steps. The sequence is that of Fatty acid synthase alpha subunit hexA from Dothistroma septosporum (Red band needle blight fungus).